The sequence spans 141 residues: Putative inactive deoxyuridine 5'-triphosphate nucleotidohydrolase-like protein FLJ16323 (141 aa).

It belongs to the dUTPase family.

The polypeptide is Putative inactive deoxyuridine 5'-triphosphate nucleotidohydrolase-like protein FLJ16323 (Homo sapiens (Human)).